The chain runs to 188 residues: ATP-dependent protease subunit HslV (188 aa).

The active site involves T14. Positions 173, 176, and 179 each coordinate Na(+).

This sequence belongs to the peptidase T1B family. HslV subfamily. As to quaternary structure, a double ring-shaped homohexamer of HslV is capped on each side by a ring-shaped HslU homohexamer. The assembly of the HslU/HslV complex is dependent on binding of ATP.

The protein resides in the cytoplasm. It catalyses the reaction ATP-dependent cleavage of peptide bonds with broad specificity.. With respect to regulation, allosterically activated by HslU binding. Protease subunit of a proteasome-like degradation complex believed to be a general protein degrading machinery. This is ATP-dependent protease subunit HslV from Caulobacter vibrioides (strain ATCC 19089 / CIP 103742 / CB 15) (Caulobacter crescentus).